Here is a 313-residue protein sequence, read N- to C-terminus: Protein TIC 22-like, chloroplastic (313 aa).

A chloroplast-targeting transit peptide spans M1–R96.

The protein belongs to the Tic22 family.

Its subcellular location is the plastid. The protein localises to the chloroplast intermembrane space. Its function is as follows. Involved in protein precursor import into chloroplasts. This is Protein TIC 22-like, chloroplastic (TIC22L) from Arabidopsis thaliana (Mouse-ear cress).